A 205-amino-acid polypeptide reads, in one-letter code: Colicin-E8 (205 aa).

2 disordered regions span residues 24 to 109 (AQTD…PDRI) and 136 to 187 (PELS…VYDM). 3 stretches are compositionally biased toward basic and acidic residues: residues 53–76 (QERR…ESKR), 88–99 (PVGDKWLDDAGK), and 159–178 (RNKD…DKPI). His-173, His-198, and His-202 together coordinate Zn(2+).

It belongs to the colicin/pyosin nuclease family.

Functionally, this plasmid-coded bactericidal protein is an endonuclease active on both single- and double-stranded DNA but with undefined specificity. Its function is as follows. Colicins are polypeptide toxins produced by and active against E.coli and closely related bacteria. The protein is Colicin-E8 (col) of Escherichia coli.